Reading from the N-terminus, the 68-residue chain is Beta-defensin 1 (68 aa).

Positions 1-21 (MRTSYLLLFILCLVLCDMDSG) are cleaved as a signal peptide. A propeptide spanning residues 22 to 32 (DTFLTGLGHRS) is cleaved from the precursor. 3 disulfides stabilise this stretch: Cys-37-Cys-66, Cys-44-Cys-59, and Cys-49-Cys-67.

Belongs to the beta-defensin family. Monomer. Homodimer.

It localises to the secreted. It is found in the membrane. Functionally, has bactericidal activity. May act as a ligand for C-C chemokine receptor CCR6. Positively regulates the sperm motility and bactericidal activity in a CCR6-dependent manner. Binds to CCR6 and triggers Ca2+ mobilization in the sperm which is important for its motility. The chain is Beta-defensin 1 (DEFB1) from Saguinus oedipus (Cotton-top tamarin).